We begin with the raw amino-acid sequence, 156 residues long: Ribosome maturation factor RimP (156 aa).

This sequence belongs to the RimP family.

It is found in the cytoplasm. Required for maturation of 30S ribosomal subunits. The chain is Ribosome maturation factor RimP from Bacillus thuringiensis (strain Al Hakam).